A 205-amino-acid chain; its full sequence is MPSVSELTKEEEETLAAKLEQQELEHSDEPILEDDEDDDDEEDDNDEDDAQGEQGGEGKSKQSRSEKKCRKAMLKLGMKPVSGVSRVTIKKSKNILFVISNPDVFKSPTSDTYIAFGEAKIEDLSSQLQTQAAEQFKAPNLSHVTMKPESSTAAQEDEDEVDDTGVEPKDIELVMTQAGVSRTKAVKALKAADGDIVSAIMDLTT.

Disordered stretches follow at residues 1–73 (MPSV…RKAM) and 137–166 (KAPNLSHVTMKPESSTAAQEDEDEVDDTGV). Residues 20–29 (EQQELEHSDE) show a composition bias toward basic and acidic residues. Over residues 30–51 (PILEDDEDDDDEEDDNDEDDAQ) the composition is skewed to acidic residues. Residues 56-66 (GEGKSKQSRSE) show a composition bias toward basic and acidic residues. The NAC-A/B domain occupies 63 to 128 (SRSEKKCRKA…AKIEDLSSQL (66 aa)). Positions 155-165 (QEDEDEVDDTG) are enriched in acidic residues. Positions 166–203 (VEPKDIELVMTQAGVSRTKAVKALKAADGDIVSAIMDL) constitute a UBA domain.

It belongs to the NAC-alpha family.

May promote appropriate targeting of ribosome-nascent polypeptide complexes. The sequence is that of Nascent polypeptide-associated complex subunit alpha-like protein from Pinus taeda (Loblolly pine).